The primary structure comprises 219 residues: Germin-like protein subfamily 2 member 1 (219 aa).

An N-terminal signal peptide occupies residues 1-21 (MASPTLTLLLLLTTVSFFISS). The cysteines at positions 32 and 47 are disulfide-linked. One can recognise a Cupin type-1 domain in the interval 61–209 (QGLAKPGLTN…AFQTSPGTVK (149 aa)). A glycan (N-linked (GlcNAc...) asparagine) is linked at Asn70. Positions 109, 111, 116, and 155 each coordinate Mn(2+).

Belongs to the germin family. Oligomer (believed to be a pentamer but probably hexamer).

The protein resides in the secreted. It is found in the extracellular space. The protein localises to the apoplast. Its function is as follows. May play a role in plant defense. Probably has no oxalate oxidase activity even if the active site is conserved. The sequence is that of Germin-like protein subfamily 2 member 1 (GLP4) from Arabidopsis thaliana (Mouse-ear cress).